Consider the following 581-residue polypeptide: Solute carrier family 15 member 3 (581 aa).

The span at 1-14 (MPAPRAREQPRVPG) shows a compositional bias: basic and acidic residues. The segment at 1-26 (MPAPRAREQPRVPGERQPLLPRGARG) is disordered. A helical membrane pass occupies residues 38-58 (VLLVEMLERAAFFGVTANLVL). N-linked (GlcNAc...) asparagine glycosylation is found at asparagine 61 and asparagine 66. 3 helical membrane-spanning segments follow: residues 76-96 (ALVF…LADV), 103-123 (AVAL…ATAF), and 155-175 (PYCA…ASSV). N-linked (GlcNAc...) asparagine glycosylation occurs at asparagine 178. A helical transmembrane segment spans residues 200–220 (NWFYWSINLGAVLSLLVVAFI). N-linked (GlcNAc...) asparagine glycosylation is present at asparagine 223. 2 helical membrane passes run 232-252 (IPVG…PVFI) and 310-330 (FQVL…WMVY). An N-linked (GlcNAc...) asparagine glycan is attached at asparagine 356. Transmembrane regions (helical) follow at residues 369 to 389 (TIPE…LVPL) and 411 to 431 (MALG…LEME). N-linked (GlcNAc...) asparagine glycosylation occurs at asparagine 439. 3 consecutive transmembrane segments (helical) span residues 458–478 (IWWQ…ASIP), 497–517 (GIFF…VALL), and 540–560 (LYFF…VWIA).

The protein belongs to the major facilitator superfamily. Proton-dependent oligopeptide transporter (POT/PTR) (TC 2.A.17) family.

The protein resides in the lysosome membrane. It localises to the endosome membrane. The catalysed reaction is glycylglycylglycine(out) + n H(+)(out) = glycylglycylglycine(in) + n H(+)(in). It catalyses the reaction carnosine(out) + n H(+)(out) = carnosine(in) + n H(+)(in). The enzyme catalyses L-histidine(out) + n H(+)(out) = L-histidine(in) + n H(+)(in). It carries out the reaction N-acetyl-D-muramoyl-L-alanyl-D-isoglutamine(out) + n H(+)(out) = N-acetyl-D-muramoyl-L-alanyl-D-isoglutamine(in) + n H(+)(in). Functionally, proton-coupled amino-acid transporter that transports free histidine and certain di- and tripeptides, and is involved in innate immune response. Also able to transport carnosine. Involved in the detection of microbial pathogens by toll-like receptors (TLRs) and NOD-like receptors (NLRs), probably by mediating transport of bacterial peptidoglycans across the endolysosomal membrane: catalyzes the transport of certain bacterial peptidoglycans, such as muramyl dipeptide (MDP), the NOD2 ligand. This is Solute carrier family 15 member 3 from Homo sapiens (Human).